A 163-amino-acid polypeptide reads, in one-letter code: Nucleotide-binding protein MAP_4063c (163 aa).

This sequence belongs to the YajQ family.

Nucleotide-binding protein. The chain is Nucleotide-binding protein MAP_4063c from Mycolicibacterium paratuberculosis (strain ATCC BAA-968 / K-10) (Mycobacterium paratuberculosis).